The primary structure comprises 310 residues: Transcription initiation factor IIB (310 aa).

Residues Glu-9–Asp-41 form a TFIIB-type zinc finger. Positions 14, 17, 33, and 36 each coordinate Zn(2+). Tandem repeats lie at residues Ser-127 to Leu-210 and Asp-221 to Glu-302.

Belongs to the TFIIB family.

Stabilizes TBP binding to an archaeal box-A promoter. Also responsible for recruiting RNA polymerase II to the pre-initiation complex (DNA-TBP-TFIIB). The sequence is that of Transcription initiation factor IIB from Methanothermobacter thermautotrophicus (strain ATCC 29096 / DSM 1053 / JCM 10044 / NBRC 100330 / Delta H) (Methanobacterium thermoautotrophicum).